Consider the following 578-residue polypeptide: Putative diflavin flavoprotein A 2 (578 aa).

The interval 39 to 233 is zinc metallo-hydrolase; that stretch reads QQGTTSNSYL…PPPRLYAPAH (195 aa). The 143-residue stretch at 262 to 404 folds into the Flavodoxin-like domain; that stretch reads VALFYASAYG…AANEFAQALK (143 aa). A flavodoxin-reductase-like region spans residues 429–578; that stretch reads VNRVVGSLCV…TAIQHRKTSS (150 aa).

It in the N-terminal section; belongs to the zinc metallo-hydrolase group 3 family. The protein in the C-terminal section; belongs to the flavodoxin reductase family. It depends on Fe cation as a cofactor.

Its function is as follows. Mediates electron transfer from NADH to oxygen, reducing it to water. This modular protein has 3 redox cofactors, in other organisms the same activity requires 2 or 3 proteins. This chain is Putative diflavin flavoprotein A 2 (dfa2), found in Thermosynechococcus vestitus (strain NIES-2133 / IAM M-273 / BP-1).